Reading from the N-terminus, the 426-residue chain is N-formyl-4-amino-5-aminomethyl-2-methylpyrimidine deformylase (426 aa).

Residues 1 to 31 are a coiled coil; it reads MDQQIYSLQKKVEEHKEELIQLAKTLISYQT. Residue His89 coordinates Zn(2+). Asp91 is an active-site residue. Asp122 contributes to the Zn(2+) binding site. Catalysis depends on Glu156, which acts as the Proton acceptor. Zn(2+) contacts are provided by Glu157, Asp180, and His394.

Belongs to the peptidase M20A family. The cofactor is Zn(2+). It depends on Co(2+) as a cofactor.

The enzyme catalyses N-formyl-4-amino-5-aminomethyl-2-methylpyrimidine + H2O = 4-amino-5-aminomethyl-2-methylpyrimidine + formate. Its pathway is cofactor biosynthesis; thiamine diphosphate biosynthesis. Its function is as follows. Catalyzes the deformylation of the formylaminopyrimidine N-formyl-4-amino-5-aminomethyl-2-methylpyrimidine (FAMP) to give the corresponding aminopyrimidine. The chain is N-formyl-4-amino-5-aminomethyl-2-methylpyrimidine deformylase from Bacillus subtilis (strain 168).